Here is a 513-residue protein sequence, read N- to C-terminus: ATP synthase subunit alpha (513 aa).

169 to 176 (GDRQTGKT) is a binding site for ATP.

It belongs to the ATPase alpha/beta chains family. As to quaternary structure, F-type ATPases have 2 components, CF(1) - the catalytic core - and CF(0) - the membrane proton channel. CF(1) has five subunits: alpha(3), beta(3), gamma(1), delta(1), epsilon(1). CF(0) has three main subunits: a(1), b(2) and c(9-12). The alpha and beta chains form an alternating ring which encloses part of the gamma chain. CF(1) is attached to CF(0) by a central stalk formed by the gamma and epsilon chains, while a peripheral stalk is formed by the delta and b chains.

The protein resides in the cell inner membrane. The catalysed reaction is ATP + H2O + 4 H(+)(in) = ADP + phosphate + 5 H(+)(out). Produces ATP from ADP in the presence of a proton gradient across the membrane. The alpha chain is a regulatory subunit. The polypeptide is ATP synthase subunit alpha (Haemophilus ducreyi (strain 35000HP / ATCC 700724)).